The chain runs to 823 residues: Lon protease (823 aa).

The Lon N-terminal domain occupies 51-246; that stretch reads IPILPLRNMV…RLLFILNREY (196 aa). 397–404 contacts ATP; that stretch reads GPPGVGKT. The region spanning 633 to 815 is the Lon proteolytic domain; the sequence is NDYAGVVTGL…QQVVDLALLR (183 aa). Residues S721 and K764 contribute to the active site.

Belongs to the peptidase S16 family. As to quaternary structure, homohexamer. Organized in a ring with a central cavity.

Its subcellular location is the cytoplasm. It catalyses the reaction Hydrolysis of proteins in presence of ATP.. ATP-dependent serine protease that mediates the selective degradation of mutant and abnormal proteins as well as certain short-lived regulatory proteins. Required for cellular homeostasis and for survival from DNA damage and developmental changes induced by stress. Degrades polypeptides processively to yield small peptide fragments that are 5 to 10 amino acids long. Binds to DNA in a double-stranded, site-specific manner. The chain is Lon protease from Parabacteroides distasonis (strain ATCC 8503 / DSM 20701 / CIP 104284 / JCM 5825 / NCTC 11152).